The sequence spans 358 residues: tRNA N6-adenosine threonylcarbamoyltransferase (358 aa).

His118 and His122 together coordinate Fe cation. Residues 143–147 (IVSGG), Asp176, Gly189, and Asn298 contribute to the substrate site. Asp326 serves as a coordination point for Fe cation.

The protein belongs to the KAE1 / TsaD family. Fe(2+) serves as cofactor.

Its subcellular location is the cytoplasm. It catalyses the reaction L-threonylcarbamoyladenylate + adenosine(37) in tRNA = N(6)-L-threonylcarbamoyladenosine(37) in tRNA + AMP + H(+). Functionally, required for the formation of a threonylcarbamoyl group on adenosine at position 37 (t(6)A37) in tRNAs that read codons beginning with adenine. Is involved in the transfer of the threonylcarbamoyl moiety of threonylcarbamoyl-AMP (TC-AMP) to the N6 group of A37, together with TsaE and TsaB. TsaD likely plays a direct catalytic role in this reaction. This is tRNA N6-adenosine threonylcarbamoyltransferase from Rhodopirellula baltica (strain DSM 10527 / NCIMB 13988 / SH1).